The sequence spans 60 residues: Cytotoxin 3 (60 aa).

Intrachain disulfides connect Cys-3–Cys-21, Cys-14–Cys-38, Cys-42–Cys-53, and Cys-54–Cys-59.

The protein belongs to the three-finger toxin family. Short-chain subfamily. Type IA cytotoxin sub-subfamily. As to quaternary structure, monomer in solution; Homodimer and oligomer in the presence of negatively charged lipids forming a pore with a size ranging between 20 and 30 Angstroms. As to expression, expressed by the venom gland.

It localises to the secreted. It is found in the target cell membrane. Functionally, shows cytolytic activity on many different cells by forming pore in lipid membranes. In vivo, increases heart rate or kills the animal by cardiac arrest. In addition, it binds to heparin with high affinity, interacts with Kv channel-interacting protein 1 (KCNIP1) in a calcium-independent manner, and binds to integrin alpha-V/beta-3 (ITGAV/ITGB3) with moderate affinity. The sequence is that of Cytotoxin 3 from Naja mossambica (Mozambique spitting cobra).